The primary structure comprises 564 residues: MCGIFCSVVNNVPLNSFNISSALKVILKNRGPDVQDEVVIDYCFGKILFAGFVLWQQGESVQKQPVVEDDFIFLFNGDIYNTSKPEYMSDTTWIAERLAECRCKEQNILKILKRLEGPHCLIIYDKREQILYFSRDALGRNSLLIERICNGFQLLSTSHFEDKKISLELPPLGLFRVKLNDLNSCVLYPWQPLNNYSTQLLRNLDLAIGWKTAVESPMSPDWMLNCNPAFSYNFYEFQYIKNNVNLYKNLIDQSEIKYTLSILHTLLSDSIKNRVRNMAPFCRLCMQKLNISPPCRHAKLCILFSGGLDCTILALLANQFVPVNEPIELINVAFESVKGQNISEKLFDVPDRKTSLVSVNELKQLCPERCWNLLKVNVTRLELQQHLTSRIKHLIYPLDTVLDESLGCAFWFASHCTHSTARVALIGSGADELFGGYTRYRNSYSRCLGNDLERQLAVQNELERDWQRISARNLARDDRIIADTGKTARSPFIEENFVKFIRSLEVYQKCCFGFPEGVGDKLLLRLYGYQIGLRDVVFLKKRAIQFGSRIANKKQNGSHQSDNL.

Cys-2 (nucleophile) is an active-site residue. One can recognise a Glutamine amidotransferase type-2 domain in the interval 2–180; sequence CGIFCSVVNN…PLGLFRVKLN (179 aa). An Asparagine synthetase domain is found at 280–541; it reads PFCRLCMQKL…GLRDVVFLKK (262 aa).

In Drosophila melanogaster (Fruit fly), this protein is Asparagine synthetase domain-containing protein CG17486.